Reading from the N-terminus, the 219-residue chain is UPF0502 protein Gura_3445 (219 aa).

Positions 162–181 are disordered; it reads AGEPDLPDDTPAPPPEPARQ.

It belongs to the UPF0502 family.

The protein is UPF0502 protein Gura_3445 of Geotalea uraniireducens (strain Rf4) (Geobacter uraniireducens).